Consider the following 333-residue polypeptide: Ketol-acid reductoisomerase (NADP(+)) (333 aa).

The KARI N-terminal Rossmann domain occupies 2–182 (AKIFYDSDCN…GASRAGIILT (181 aa)). NADP(+)-binding positions include 25–28 (FGSQ), Ser-51, Ser-53, and 83–86 (DEKQ). His-108 is an active-site residue. An NADP(+)-binding site is contributed by Gly-134. The region spanning 183–328 (TFKEETETDL…KELRKMMPWI (146 aa)) is the KARI C-terminal knotted domain. 4 residues coordinate Mg(2+): Asp-191, Glu-195, Glu-227, and Glu-231. Position 252 (Ser-252) interacts with substrate.

Belongs to the ketol-acid reductoisomerase family. Mg(2+) is required as a cofactor.

The catalysed reaction is (2R)-2,3-dihydroxy-3-methylbutanoate + NADP(+) = (2S)-2-acetolactate + NADPH + H(+). It catalyses the reaction (2R,3R)-2,3-dihydroxy-3-methylpentanoate + NADP(+) = (S)-2-ethyl-2-hydroxy-3-oxobutanoate + NADPH + H(+). It participates in amino-acid biosynthesis; L-isoleucine biosynthesis; L-isoleucine from 2-oxobutanoate: step 2/4. It functions in the pathway amino-acid biosynthesis; L-valine biosynthesis; L-valine from pyruvate: step 2/4. Its function is as follows. Involved in the biosynthesis of branched-chain amino acids (BCAA). Catalyzes an alkyl-migration followed by a ketol-acid reduction of (S)-2-acetolactate (S2AL) to yield (R)-2,3-dihydroxy-isovalerate. In the isomerase reaction, S2AL is rearranged via a Mg-dependent methyl migration to produce 3-hydroxy-3-methyl-2-ketobutyrate (HMKB). In the reductase reaction, this 2-ketoacid undergoes a metal-dependent reduction by NADPH to yield (R)-2,3-dihydroxy-isovalerate. The protein is Ketol-acid reductoisomerase (NADP(+)) of Caldicellulosiruptor bescii (strain ATCC BAA-1888 / DSM 6725 / KCTC 15123 / Z-1320) (Anaerocellum thermophilum).